The sequence spans 624 residues: Phosphomethylpyrimidine synthase (624 aa).

Substrate contacts are provided by residues Asn-231, Met-260, Tyr-289, His-325, 345-347 (SRG), 386-389 (DGLR), and Glu-425. His-429 is a Zn(2+) binding site. Tyr-452 contributes to the substrate binding site. His-493 contacts Zn(2+). Positions 573, 576, and 581 each coordinate [4Fe-4S] cluster.

Belongs to the ThiC family. As to quaternary structure, homodimer. The cofactor is [4Fe-4S] cluster.

The enzyme catalyses 5-amino-1-(5-phospho-beta-D-ribosyl)imidazole + S-adenosyl-L-methionine = 4-amino-2-methyl-5-(phosphooxymethyl)pyrimidine + CO + 5'-deoxyadenosine + formate + L-methionine + 3 H(+). It functions in the pathway cofactor biosynthesis; thiamine diphosphate biosynthesis. Catalyzes the synthesis of the hydroxymethylpyrimidine phosphate (HMP-P) moiety of thiamine from aminoimidazole ribotide (AIR) in a radical S-adenosyl-L-methionine (SAM)-dependent reaction. The sequence is that of Phosphomethylpyrimidine synthase from Myxococcus xanthus (strain DK1622).